Here is a 423-residue protein sequence, read N- to C-terminus: Zinc finger protein Gfi-1 (423 aa).

The segment at 1–20 is SNAG domain; the sequence is MPRSFLVKSKKAHSYHQPRS. Positions 1 to 76 are disordered; sequence MPRSFLVKSK…DRASASPNSC (76 aa). 2 positions are modified to phosphoserine: S20 and S57. Over residues 48–57 the composition is skewed to basic and acidic residues; sequence SKMEPRERLS. The interval 141 to 258 is required for interaction with RELA; it reads RQCSALERSA…LLLGGGSYKC (118 aa). 6 consecutive C2H2-type zinc fingers follow at residues 256–279, 285–307, 313–335, 341–363, 369–391, and 397–420; these read YKCI…RRSH, FACE…KAVH, FDCK…LLIH, YPCQ…TFIH, HKCQ…SRKH, and FGCD…ETQH.

In terms of assembly, interacts (via the zinc-finger domain) with ARIH2; the interaction prevents GFI1 ubiquitination and proteasomal degradation. Forms a complex with EHMT2 and HDAC1 to promote 'Lys-9' dimethylation of H3 (H3K9Me2) and repress expression of target genes. Interacts directly with EHMT2. Interacts with RUNX1T1; the interaction represses HDAC-mediated transcriptional activity. Interacts (via the C-terminal zinc fingers) with ZBTB17; the interaction results in the recruitment of GFI1 to the CDKN1A/p21 and CDKNIB promoters and repression of transcription. Interacts with U2AF1L4. Component of RCOR-GFI-KDM1A-HDAC complexes. Interacts directly with RCOR1, KDM1A and HDAC2. Also interacts with HDAC1. Component of the GFI1-AJUBA-HDAC1 repressor complex. Interacts directly with AJUBA (via its LIM domains); the interaction results in the HDAC-dependent corepression of a subset of GFI1 target genes and, occurs independently of the SNAG domain. Interacts with SPI1; the interaction inhibits SPI1 transcriptional activity targeted at macrophage-specific genes, repressing macrophage differentiation of myeloid progenitor cells and promoting granulocyte commitment. Interacts with PIAS3; the interaction relieves the inhibitory effect of PIAS3 on STAT3-mediated transcriptional activity. Interacts with RELA; the interaction occurs on liposaccharide (LPS) stimulation and controls RELA DNA binding activity and regulates endotoxin-mediated TOLL-like receptor inflammatory response. In terms of processing, ubiquitinated.

It is found in the nucleus. Functionally, transcription repressor essential for hematopoiesis. Functions in a cell-context and development-specific manner. Binds to 5'-TAAATCAC[AT]GCA-3' in the promoter region of a large number of genes. Component of several complexes, including the EHMT2-GFI1-HDAC1, AJUBA-GFI1-HDAC1 and RCOR-GFI-KDM1A-HDAC complexes, that suppress, via histone deacetylase (HDAC) recruitment, a number of genes implicated in multilineage blood cell development. Regulates neutrophil differentiation, promotes proliferation of lymphoid cells, and is required for granulocyte development. Inhibits SPI1 transcriptional activity at macrophage-specific genes, repressing macrophage differentiation of myeloid progenitor cells and promoting granulocyte commitment. Mediates, together with U2AF1L4, the alternative splicing of CD45 and controls T-cell receptor signaling. Regulates the endotoxin-mediated Toll-like receptor (TLR) inflammatory response by antagonizing RELA. Cooperates with CBFA2T2 to regulate ITGB1-dependent neurite growth. Controls cell-cycle progression by repressing CDKNIA/p21 transcription in response to TGFB1 via recruitment of GFI1 by ZBTB17 to the CDKNIA/p21 and CDKNIB promoters. Required for the maintenance of inner ear hair cells. In addition to its role in transcription, acts as a substrate adapter for PRMT1 in the DNA damage response. Facilitates the recognition of TP53BP1 and MRE11 substrates by PRMT1, promoting their methylation and the DNA damage response. The protein is Zinc finger protein Gfi-1 (Gfi1) of Mus musculus (Mouse).